Reading from the N-terminus, the 306-residue chain is D-alanine--D-alanine ligase (306 aa).

In terms of domain architecture, ATP-grasp spans 107-300; sequence KEAYRAAGLP…FGQLCAWMVE (194 aa). 134–184 is a binding site for ATP; that stretch reads MQPPYVVKPYNEGSSVGVYIVTEAANGPPVLAPDLPATLMVEEYVPGRELS. Mg(2+)-binding residues include aspartate 251, glutamate 267, and asparagine 269.

It belongs to the D-alanine--D-alanine ligase family. Requires Mg(2+) as cofactor. It depends on Mn(2+) as a cofactor.

It is found in the cytoplasm. It carries out the reaction 2 D-alanine + ATP = D-alanyl-D-alanine + ADP + phosphate + H(+). The protein operates within cell wall biogenesis; peptidoglycan biosynthesis. Functionally, cell wall formation. This is D-alanine--D-alanine ligase from Ruegeria pomeroyi (strain ATCC 700808 / DSM 15171 / DSS-3) (Silicibacter pomeroyi).